The following is a 103-amino-acid chain: ATP synthase F(0) complex subunit g, mitochondrial (103 aa).

Position 2 is an N-acetylalanine (Ala2). Lys11, Lys24, Lys35, and Lys54 each carry N6-acetyllysine.

Belongs to the ATPase g subunit family. In terms of assembly, component of the ATP synthase complex composed at least of ATP5F1A/subunit alpha, ATP5F1B/subunit beta, ATP5MC1/subunit c (homooctomer), MT-ATP6/subunit a, MT-ATP8/subunit 8, ATP5ME/subunit e, ATP5MF/subunit f, ATP5MG/subunit g, ATP5MK/subunit k, ATP5MJ/subunit j, ATP5F1C/subunit gamma, ATP5F1D/subunit delta, ATP5F1E/subunit epsilon, ATP5PF/subunit F6, ATP5PB/subunit b, ATP5PD/subunit d, ATP5PO/subunit OSCP. ATP synthase complex consists of a soluble F(1) head domain (subunits alpha(3) and beta(3)) - the catalytic core - and a membrane F(0) domain - the membrane proton channel (subunits c, a, 8, e, f, g, k and j). These two domains are linked by a central stalk (subunits gamma, delta, and epsilon) rotating inside the F1 region and a stationary peripheral stalk (subunits F6, b, d, and OSCP).

The protein resides in the mitochondrion. It localises to the mitochondrion inner membrane. Its function is as follows. Subunit g, of the mitochondrial membrane ATP synthase complex (F(1)F(0) ATP synthase or Complex V) that produces ATP from ADP in the presence of a proton gradient across the membrane which is generated by electron transport complexes of the respiratory chain. ATP synthase complex consist of a soluble F(1) head domain - the catalytic core - and a membrane F(1) domain - the membrane proton channel. These two domains are linked by a central stalk rotating inside the F(1) region and a stationary peripheral stalk. During catalysis, ATP synthesis in the catalytic domain of F(1) is coupled via a rotary mechanism of the central stalk subunits to proton translocation. In vivo, can only synthesize ATP although its ATP hydrolase activity can be activated artificially in vitro. Part of the complex F(0) domain. In Homo sapiens (Human), this protein is ATP synthase F(0) complex subunit g, mitochondrial.